A 258-amino-acid chain; its full sequence is Indole-3-glycerol phosphate synthase (258 aa).

This sequence belongs to the TrpC family.

It catalyses the reaction 1-(2-carboxyphenylamino)-1-deoxy-D-ribulose 5-phosphate + H(+) = (1S,2R)-1-C-(indol-3-yl)glycerol 3-phosphate + CO2 + H2O. The protein operates within amino-acid biosynthesis; L-tryptophan biosynthesis; L-tryptophan from chorismate: step 4/5. This Geobacillus sp. (strain WCH70) protein is Indole-3-glycerol phosphate synthase.